Reading from the N-terminus, the 627-residue chain is Carene synthase, chloroplastic (627 aa).

The N-terminal 36 residues, 1–36 (MSVISIMPLASKPCLNKSFISSTHEPKALRRPISTV), are a transit peptide targeting the chloroplast. Asp378, Asp382, and Asp530 together coordinate Mg(2+). Positions 378-382 (DDMYD) match the DDXXD motif motif.

The protein belongs to the terpene synthase family. Tpsd subfamily. It depends on Mg(2+) as a cofactor. Mn(2+) is required as a cofactor.

The protein resides in the plastid. The protein localises to the chloroplast. The enzyme catalyses (2E)-geranyl diphosphate = (+)-car-3-ene + diphosphate. It participates in terpene metabolism; oleoresin biosynthesis. In terms of biological role, terpene synthase (TPS) involved in defensive oleoresin formation in conifers in response to insect attack or other injury. The polypeptide is Carene synthase, chloroplastic (3CAR) (Picea glauca (White spruce)).